We begin with the raw amino-acid sequence, 156 residues long: Small ribosomal subunit protein uS7 (156 aa).

It belongs to the universal ribosomal protein uS7 family. As to quaternary structure, part of the 30S ribosomal subunit. Contacts proteins S9 and S11.

Its function is as follows. One of the primary rRNA binding proteins, it binds directly to 16S rRNA where it nucleates assembly of the head domain of the 30S subunit. Is located at the subunit interface close to the decoding center, probably blocks exit of the E-site tRNA. This chain is Small ribosomal subunit protein uS7, found in Brucella abortus (strain S19).